A 719-amino-acid polypeptide reads, in one-letter code: Protein Hook homolog 2 (719 aa).

The required for localization to the centrosome and induction of aggresome formation stretch occupies residues 1–161 (MSVDKAELCG…ELMTKDTPDS (161 aa)). Positions 1–548 (MSVDKAELCG…LKRKLEEHLQ (548 aa)) are sufficient for interaction with microtubules. In terms of domain architecture, Calponin-homology (CH) spans 6-122 (AELCGSLLTW…KLLQLVLGCA (117 aa)). Ser-163 is modified (phosphoserine). Coiled-coil stretches lie at residues 180 to 427 (LSEE…AQLQ) and 455 to 607 (AELR…VDKA). Thr-230 is modified (phosphothreonine). Residues 533 to 719 (DAISILLKRK…SLNLRPTDKH (187 aa)) are required for localization to the centrosome and induction of aggresome formation. Residues 584–719 (HNLQKKDADL…SLNLRPTDKH (136 aa)) form a sufficient for interaction with CNTRL region. A disordered region spans residues 696 to 719 (LATNSRRGPLGRLASLNLRPTDKH). Ser-710 is modified (phosphoserine).

The protein belongs to the hook family. As to quaternary structure, self-associates. Component of the FTS/Hook/FHIP complex (FHF complex), composed of AKTIP/FTS, FHIP1B, and one or more members of the Hook family of proteins HOOK1, HOOK2, and HOOK3. May interact directly with AKTIP/FTS, HOOK1 and HOOK3. Associates with several subunits of the homotypic vesicular sorting complex (the HOPS complex) including VPS16 and VPS41; these interactions may be indirect. Interacts with CNTRL. Interacts with microtubules. Interacts with ZC3H14. Interacts with LRGUK (via guanylate kinase-like domain). Interacts with CCDC181. Interacts with AP4M1; the interaction is direct, mediates the interaction between FTS-Hook-FHIP (FHF) complex and AP-4 and the perinuclear distribution of AP-4.

The protein resides in the cytoplasm. The protein localises to the cytoskeleton. It is found in the microtubule organizing center. Its subcellular location is the centrosome. It localises to the golgi apparatus. The protein resides in the trans-Golgi network. Component of the FTS/Hook/FHIP complex (FHF complex). The FHF complex may function to promote vesicle trafficking and/or fusion via the homotypic vesicular protein sorting complex (the HOPS complex). Contributes to the establishment and maintenance of centrosome function. May function in the positioning or formation of aggresomes, which are pericentriolar accumulations of misfolded proteins, proteasomes and chaperones. FHF complex promotes the distribution of AP-4 complex to the perinuclear area of the cell. The polypeptide is Protein Hook homolog 2 (HOOK2) (Homo sapiens (Human)).